A 1033-amino-acid polypeptide reads, in one-letter code: Potassium-transporting ATPase alpha chain 2 (1033 aa).

Residues 1-96 lie on the Cytoplasmic side of the membrane; that stretch reads MRRKTLEIYS…NALSPPKQTP (96 aa). Residues 97-117 traverse the membrane as a helical segment; sequence EIIKFLKQMIGGFSILLWVGA. The Lumenal segment spans residues 118-140; that stretch reads ILCWIAYGIQYASNQSGSLDNVY. The chain crosses the membrane as a helical span at residues 141–161; it reads LGVVLALVVILTGIFAYYQEA. Residues 162–297 are Cytoplasmic-facing; the sequence is KSTNIMSSFS…NEKTPIATEI (136 aa). A helical membrane pass occupies residues 298 to 317; it reads EHFVHIVAGVAVSIGILFFI. Topologically, residues 318–329 are lumenal; sequence IAVSLKYRVLDS. Residues 330–347 traverse the membrane as a helical segment; the sequence is IIFLIGIIVANVPEGLLA. Residues 348-781 lie on the Cytoplasmic side of the membrane; it reads TVTVTLSLTA…EEGRLIFDNL (434 aa). The active-site 4-aspartylphosphate intermediate is the Asp385. Mg(2+)-binding residues include Asp726 and Asp730. A helical transmembrane segment spans residues 782–801; the sequence is KKTIAYTLTKNIAELCPFLV. Over 802–811 the chain is Lumenal; it reads YIIVGLPLPI. A helical membrane pass occupies residues 812-832; the sequence is GTITILFIDLGTDIIPSIALA. The Cytoplasmic segment spans residues 833-852; sequence YEKVESDIMNRKPRHKKKDR. The chain crosses the membrane as a helical span at residues 853–875; sequence LVNHQLAIYSYLHIGLMQALGAF. Residues 876 to 927 are Lumenal-facing; that stretch reads LVYFTVYAQQGFWPTSLIQLRVKWEQDYVNDLEDSYGQQWTRYQRKYLEWTG. A helical membrane pass occupies residues 928–947; the sequence is YTAFFVGIMVQQIADLIIRK. Residues 948–961 lie on the Cytoplasmic side of the membrane; the sequence is TRRNSIFQQGLFRN. Ser952 is subject to Phosphoserine; by PKA. Residues 962–980 traverse the membrane as a helical segment; sequence KVIWVGITSQIIVALILSC. Topologically, residues 981-995 are lumenal; the sequence is GLGSITALNFTMLRV. Residues 996-1016 form a helical membrane-spanning segment; it reads QYWFVAVPHAILIWVYDEVRK. Residues 1017–1033 are Cytoplasmic-facing; sequence LFLRLYPGSWWDKNMYY.

Belongs to the cation transport ATPase (P-type) (TC 3.A.3) family. Type IIC subfamily. As to quaternary structure, composed of two subunits: alpha (catalytic) and beta. As to expression, found in skin, kidney and distal colon.

It is found in the membrane. It catalyses the reaction K(+)(out) + ATP + H2O + H(+)(in) = K(+)(in) + ADP + phosphate + 2 H(+)(out). Its function is as follows. Catalyzes the hydrolysis of ATP coupled with the exchange of H(+) and K(+) ions across the plasma membrane. Responsible for potassium absorption in various tissues. This is Potassium-transporting ATPase alpha chain 2 (ATP12A) from Cavia porcellus (Guinea pig).